A 271-amino-acid polypeptide reads, in one-letter code: Regulatory protein RecX (271 aa).

Belongs to the RecX family.

The protein resides in the cytoplasm. In terms of biological role, modulates RecA activity. In Lactobacillus delbrueckii subsp. bulgaricus (strain ATCC 11842 / DSM 20081 / BCRC 10696 / JCM 1002 / NBRC 13953 / NCIMB 11778 / NCTC 12712 / WDCM 00102 / Lb 14), this protein is Regulatory protein RecX.